We begin with the raw amino-acid sequence, 487 residues long: MGRSRGNFQNFEDPTQRTRKKKNAANVENFESTSLVPGAEGGGKYNCDYCQKDITGKIRIKCAVCPDFDLCIECMSVGAEITPHKCDHPYRVMGNLTFPLICPDWSADDEMLLLEGLEIYGLGNWAEVAEHVGTKSKEQCLEHYRNIYLNSPFFPLPDMSHVAGKNRKELQAMAKGRIDDKKAEQNMKEEYPFSPPKVKVEDTQKESFVDRSFGGKKPVSTSVNNSLVELSNYNQKREEFDPEYDNDAEQLLAEMEFKENDTPEEHELKLRVLRIYSKRLDERKRRKEFIIERNLLYPNPFEKDLSQEEKVQCRRLDVFMRFHSKEEHDELLRNVVSEYRMVKRLKDLKEAQVAGCRSTAEAERYLGRKRKRENEEGMNRGKESGQFGQIAGEMGSRPPVQASSSYVNDLDLIGFTESQLLSESEKRLCSEVKLVPPVYLQMQQVMSHEIFKGNVTKKSDAYSLFKIDPTKVDRVYDMLVKKGIAQL.

Over residues 1–13 (MGRSRGNFQNFED) the composition is skewed to polar residues. Residues 1–25 (MGRSRGNFQNFEDPTQRTRKKKNAA) form a disordered region. A ZZ-type zinc finger spans residues 42 to 98 (GGKYNCDYCQKDITGKIRIKCAVCPDFDLCIECMSVGAEITPHKCDHPYRVMGNLTF). Zn(2+)-binding residues include cysteine 47, cysteine 50, cysteine 62, cysteine 65, cysteine 71, cysteine 74, histidine 84, and histidine 88. The SANT domain maps to 100 to 152 (LICPDWSADDEMLLLEGLEIYGLGNWAEVAEHVGTKSKEQCLEHYRNIYLNSP). Lysine 216 bears the N6-acetyllysine; by GCN5 mark. Residues 368-383 (RKRKRENEEGMNRGKE) are compositionally biased toward basic and acidic residues. Residues 368–388 (RKRKRENEEGMNRGKESGQFG) are disordered. One can recognise an SWIRM domain in the interval 401–487 (QASSSYVNDL…MLVKKGIAQL (87 aa)).

Interacts in vitro with the HAT domain of GCN5 and with the DNA-binding domain of the transcriptional activator DREB1B/CBF1. Interacts with BZIP11. Post-translationally, acetylated in vitro by GCN5, but acetylation is not essential for biological activity. As to expression, expressed in roots, leaves, stems, flowers and siliques, with the strongest activity in the meristematic zones.

Its subcellular location is the nucleus. Its function is as follows. Required for the function of some acidic activation domains, which activate transcription from a distant site. The exact mechanism of action is not yet known. ADA2 stimulates the acetyltransferase activity of GCN5 on free histones or nucleosomes, probably by opening up the promoter region. Mediates auxin and cytokinin signals in the control of cell proliferation and might be involved in repression of a freezing tolerance pathway at warm temperature. Involved in the positive regulation of salt-induced gene expression by maintaining locus-specific acetylation of histones H4 and H3. The protein is Transcriptional adapter ADA2b (ADA2B) of Arabidopsis thaliana (Mouse-ear cress).